A 434-amino-acid polypeptide reads, in one-letter code: Putative G3BP-like protein (434 aa).

Residues 18–134 (IGWMFVQEYY…YFVLNDIFRF (117 aa)) form the NTF2 domain. Disordered regions lie at residues 141–180 (EEEE…EGHY) and 274–308 (VKSQ…PYTQ). At S145 the chain carries Phosphoserine. Positions 148 to 157 (AVEKEKKDVA) are enriched in basic and acidic residues. The segment covering 276–291 (SQASVSSTASTTGQTV) has biased composition (low complexity). A compositionally biased stretch (polar residues) spans 296–308 (ADQTQQPTAPYTQ). The RRM domain maps to 315–386 (TSVFVKNIPP…ATLNIEERRR (72 aa)). Residues 390 to 434 (GKFNKSGDKKSNDNYNGMKRNFRKGNRGAFDGRSKEVTTSKKQNN) are disordered. A compositionally biased stretch (basic and acidic residues) spans 419-428 (FDGRSKEVTT).

Functionally, probable scaffold protein that may be involved in mRNA transport. In Schizosaccharomyces pombe (strain 972 / ATCC 24843) (Fission yeast), this protein is Putative G3BP-like protein (nxt3).